The chain runs to 179 residues: Replication restart protein DnaT (179 aa).

Residues 156 to 179 are disordered; that stretch reads GGLPKRDVNTVSEPDSQIPPGFRG.

This sequence belongs to the DnaT family. In terms of assembly, homooligomerizes. Interacts with PriB. Component of the replication restart primosome. Primosome assembly occurs via a 'hand-off' mechanism. PriA binds to replication forks, subsequently PriB then DnaT bind; DnaT then displaces ssDNA to generate the helicase loading substrate.

In terms of biological role, involved in the restart of stalled replication forks, which reloads the replicative helicase on sites other than the origin of replication. Can function in multiple replication restart pathways. Displaces ssDNA from a PriB-ssDNA complex. Probably forms a spiral filament on ssDNA. The sequence is that of Replication restart protein DnaT from Escherichia coli O17:K52:H18 (strain UMN026 / ExPEC).